The chain runs to 359 residues: Fructose-bisphosphate aldolase, cytoplasmic isozyme 2 (359 aa).

The substrate site is built by Arg52 and Lys143. The Proton acceptor role is filled by Glu184. Residue Lys226 is the Schiff-base intermediate with dihydroxyacetone-P of the active site.

Belongs to the class I fructose-bisphosphate aldolase family.

It is found in the cytoplasm. It carries out the reaction beta-D-fructose 1,6-bisphosphate = D-glyceraldehyde 3-phosphate + dihydroxyacetone phosphate. It participates in carbohydrate degradation; glycolysis; D-glyceraldehyde 3-phosphate and glycerone phosphate from D-glucose: step 4/4. The chain is Fructose-bisphosphate aldolase, cytoplasmic isozyme 2 from Pisum sativum (Garden pea).